Consider the following 415-residue polypeptide: MGLKKFLEDIEHHFEPGGKHEKWFALYEAAATLFYTPGLVTKRSSHVRDSVDLKRIMIMVWLAVFPAMFWGMYNAGGQAIAALNHLYSGDQLAAIVAGNWHYWLTEMLGGTMSSDAGWGSKMLLGATYFLPIYATVFIVGGFWEVLFCMVRKHEVNEGFFVTSILFALIVPPTLPLWQAALGITFGVVVAKEVFGGTGRNFLNPALAGRAFLFFAYPAQISGDLVWTAADGYSGATALSQWAQGGAGALINNATGQTITWMDAFIGNIPGSIGEVSTLALMIGAAFIVYMGIASWRIIGGVMIGMILLSTLFNVIGSDTNAMFNMPWHWHLVLGGFAFGMFFMATDPVSASFTNSGKWAYGILIGVMCVLIRVVNPAYPEGMMLAILFANLFAPLFDHVVVERNIKRRLARYGKQ.

4 helical membrane-spanning segments follow: residues W23–V40, I56–G76, F129–M149, and I164–T184. T236 bears the FMN phosphoryl threonine mark. Transmembrane regions (helical) follow at residues V275–W295, I297–S317, M325–T345, W358–Y378, and G381–V401.

Belongs to the NqrB/RnfD family. Composed of six subunits; NqrA, NqrB, NqrC, NqrD, NqrE and NqrF. It depends on riboflavin as a cofactor. FMN serves as cofactor.

Its subcellular location is the cell inner membrane. The catalysed reaction is a ubiquinone + n Na(+)(in) + NADH + H(+) = a ubiquinol + n Na(+)(out) + NAD(+). Functionally, NQR complex catalyzes the reduction of ubiquinone-1 to ubiquinol by two successive reactions, coupled with the transport of Na(+) ions from the cytoplasm to the periplasm. NqrA to NqrE are probably involved in the second step, the conversion of ubisemiquinone to ubiquinol. This Vibrio cholerae serotype O1 (strain ATCC 39541 / Classical Ogawa 395 / O395) protein is Na(+)-translocating NADH-quinone reductase subunit B.